We begin with the raw amino-acid sequence, 835 residues long: Outer membrane usher protein FasD (835 aa).

A signal peptide spans 1-21 (MNKYPPLLTMLIIGIGSNAVA). Cys-810 and Cys-834 are joined by a disulfide.

It belongs to the fimbrial export usher family.

Its subcellular location is the cell outer membrane. In terms of biological role, involved in the export and assembly of the 987P fimbriae subunits across the outer membrane. The chain is Outer membrane usher protein FasD (fasD) from Escherichia coli.